Here is a 337-residue protein sequence, read N- to C-terminus: Inositol 2-dehydrogenase (337 aa).

It belongs to the Gfo/Idh/MocA family. Homotetramer.

The catalysed reaction is myo-inositol + NAD(+) = scyllo-inosose + NADH + H(+). Functionally, involved in the oxidation of myo-inositol (MI) to 2-keto-myo-inositol (2KMI or 2-inosose). The chain is Inositol 2-dehydrogenase from Burkholderia vietnamiensis (strain G4 / LMG 22486) (Burkholderia cepacia (strain R1808)).